A 525-amino-acid chain; its full sequence is ATP synthase subunit alpha (525 aa).

ATP is bound at residue 169–176 (GDRQTGKT).

It belongs to the ATPase alpha/beta chains family. F-type ATPases have 2 components, CF(1) - the catalytic core - and CF(0) - the membrane proton channel. CF(1) has five subunits: alpha(3), beta(3), gamma(1), delta(1), epsilon(1). CF(0) has three main subunits: a(1), b(2) and c(9-12). The alpha and beta chains form an alternating ring which encloses part of the gamma chain. CF(1) is attached to CF(0) by a central stalk formed by the gamma and epsilon chains, while a peripheral stalk is formed by the delta and b chains.

The protein resides in the cell membrane. It carries out the reaction ATP + H2O + 4 H(+)(in) = ADP + phosphate + 5 H(+)(out). Its function is as follows. Produces ATP from ADP in the presence of a proton gradient across the membrane. The alpha chain is a regulatory subunit. The chain is ATP synthase subunit alpha from Mesoplasma florum (strain ATCC 33453 / NBRC 100688 / NCTC 11704 / L1) (Acholeplasma florum).